Consider the following 435-residue polypeptide: Glutamate-1-semialdehyde 2,1-aminomutase (435 aa).

At K270 the chain carries N6-(pyridoxal phosphate)lysine.

It belongs to the class-III pyridoxal-phosphate-dependent aminotransferase family. HemL subfamily. In terms of assembly, homodimer. Requires pyridoxal 5'-phosphate as cofactor.

Its subcellular location is the cytoplasm. It carries out the reaction (S)-4-amino-5-oxopentanoate = 5-aminolevulinate. It participates in porphyrin-containing compound metabolism; protoporphyrin-IX biosynthesis; 5-aminolevulinate from L-glutamyl-tRNA(Glu): step 2/2. The protein is Glutamate-1-semialdehyde 2,1-aminomutase of Wigglesworthia glossinidia brevipalpis.